The chain runs to 533 residues: Thromboxane-A synthase (533 aa).

Residues 1–10 (MEVLGLLKFE) lie on the Cytoplasmic side of the membrane. A helical transmembrane segment spans residues 11-31 (VSGTVVTVTLSVVLLALLKWY). The Lumenal portion of the chain corresponds to 32 to 75 (STSAFSRLRKLGIRHPEPSPFVGNLMFFRQGFWESHLELRERYG). The chain crosses the membrane as a helical span at residues 76–96 (PLCGYYLGRRMYIVISDPDMI). Topologically, residues 97 to 223 (KEVLVENFSN…QRVFAFSTPR (127 aa)) are cytoplasmic. The helical transmembrane segment at 224–244 (PLLALILSFPSIMVPLARILP) threads the bilayer. Residues 245–335 (NKNRDELNGF…LTVDEIAGQA (91 aa)) lie on the Lumenal side of the membrane. Residues 336–356 (FLFLIAGHEITTNTLSFITYL) traverse the membrane as a helical segment. The Cytoplasmic segment spans residues 357-533 (LATHPECQER…NGVYVKIVSR (177 aa)). A heme-binding site is contributed by Cys479.

It belongs to the cytochrome P450 family. Monomer. It depends on heme as a cofactor. As to expression, expressed in bone marrow, spleen, lung, thymus, liver, uterus, and macrophages.

It is found in the endoplasmic reticulum membrane. It catalyses the reaction prostaglandin H2 = thromboxane A2. The enzyme catalyses prostaglandin H2 = (12S)-hydroxy-(5Z,8E,10E)-heptadecatrienoate + malonaldehyde. The catalysed reaction is a hydroperoxyeicosatetraenoate = an oxoeicosatetraenoate + H2O. It carries out the reaction (15S)-hydroperoxy-(5Z,8Z,11Z,13E)-eicosatetraenoate = 15-oxo-(5Z,8Z,11Z,13E)-eicosatetraenoate + H2O. It catalyses the reaction (15S)-hydroperoxy-(5Z,8Z,11Z,13E)-eicosatetraenoate + AH2 = (15S)-hydroxy-(5Z,8Z,11Z,13E)-eicosatetraenoate + A + H2O. Functionally, catalyzes the conversion of prostaglandin H2 (PGH2) to thromboxane A2 (TXA2), a potent inducer of blood vessel constriction and platelet aggregation. Also cleaves PGH2 to 12-hydroxy-heptadecatrienoicacid (12-HHT) and malondialdehyde, which is known to act as a mediator of DNA damage. 12-HHT and malondialdehyde are formed stoichiometrically in the same amounts as TXA2. Additionally, displays dehydratase activity, toward (15S)-hydroperoxy-(5Z,8Z,11Z,13E)-eicosatetraenoate (15(S)-HPETE) producing 15-KETE and 15-HETE. This is Thromboxane-A synthase (Tbxas1) from Rattus norvegicus (Rat).